A 147-amino-acid polypeptide reads, in one-letter code: UPF0735 ACT domain-containing protein GTNG_2535 (147 aa).

The 76-residue stretch at 69–144 folds into the ACT domain; that stretch reads TLFFHLEDRS…FVEKVEIVGS (76 aa).

Belongs to the UPF0735 family.

This chain is UPF0735 ACT domain-containing protein GTNG_2535, found in Geobacillus thermodenitrificans (strain NG80-2).